Here is a 551-residue protein sequence, read N- to C-terminus: Sodium-dependent high-affinity dicarboxylate transporter 2 (551 aa).

10 consecutive transmembrane segments (helical) span residues 9 to 29, 34 to 54, 82 to 102, 119 to 139, 194 to 214, 243 to 263, 347 to 367, 417 to 437, 449 to 469, and 497 to 517; these read LIKK…LFFG, CLFS…PIGV, SIVL…TGLH, VMLL…SDTA, FCKA…TAII, WMVF…IILV, VSGV…FDPI, IFVG…IVIM, IFIP…LYLA, and VISM…CILI.

The protein belongs to the SLC13A/DASS transporter (TC 2.A.47) family. NADC subfamily.

The protein resides in the membrane. Functionally, high-affinity sodium-dicarboxylate cotransporter that accepts a range of tricarboxylic acid-cycle intermediates with 4-5 carbon atoms. There is no interaction with monocarboxylates. This Caenorhabditis elegans protein is Sodium-dependent high-affinity dicarboxylate transporter 2 (nac-2).